Reading from the N-terminus, the 498-residue chain is Early growth response protein 1 (498 aa).

Disordered regions lie at residues 137–203 (NASP…TASI) and 287–308 (PSRMRKYPNRPSKTPPHERPYA). A compositionally biased stretch (low complexity) spans 139–163 (SPSSAPSSSPSSSSSSSQSPPLSCS). The segment covering 179-202 (FPNSSPELFPDQSPQPFQNASTAS) has biased composition (polar residues). 3 consecutive C2H2-type zinc fingers follow at residues 307 to 331 (YACPVESCDRRFSRSDELTRHIRIH), 337 to 359 (FQCRICMRNFSRSDHLTTHIRTH), and 365 to 387 (FACDICGRKFARSDERKRHTKIH). The tract at residues 378 to 422 (DERKRHTKIHLRQKDKKADKATPVSVASPVSSYSPSASTSYPSPV) is disordered. A compositionally biased stretch (basic residues) spans 382–392 (RHTKIHLRQKD). The segment covering 398-422 (ATPVSVASPVSSYSPSASTSYPSPV) has biased composition (low complexity).

It belongs to the EGR C2H2-type zinc-finger protein family.

It localises to the nucleus. Its subcellular location is the cytoplasm. Transcriptional regulator. Recognizes and binds to the DNA sequence 5'-GCG(T/G)GGGCG-3'(EGR-site) in the promoter region of target genes. Binds double-stranded target DNA, irrespective of the cytosine methylation status. Regulates the transcription of numerous target genes, and thereby plays an important role in regulating the response to growth factors, DNA damage, and ischemia. Plays a role in the regulation of cell survival, proliferation and cell death. Mediates responses to ischemia and hypoxia; regulates the expression of proteins that are involved in inflammatory processes. Plays a role in regulating the expression of circadian clock genes. The sequence is that of Early growth response protein 1 from Xenopus tropicalis (Western clawed frog).